We begin with the raw amino-acid sequence, 841 residues long: Probable alpha-glucuronidase A (841 aa).

The N-terminal stretch at 1–20 (MRGLNLFQLILALLLSMVAA) is a signal peptide. Asn51, Asn76, Asn85, Asn149, Asn222, Asn279, Asn310, Asn343, Asn450, Asn465, Asn527, Asn576, Asn682, Asn723, and Asn732 each carry an N-linked (GlcNAc...) asparagine glycan.

It belongs to the glycosyl hydrolase 67 family.

Its subcellular location is the secreted. It catalyses the reaction an alpha-D-glucuronoside + H2O = D-glucuronate + an alcohol. Alpha-glucuronidase involved in the hydrolysis of xylan, a major structural heterogeneous polysaccharide found in plant biomass representing the second most abundant polysaccharide in the biosphere, after cellulose. Releases 4-O-methylglucuronic acid from xylan. This Aspergillus niger protein is Probable alpha-glucuronidase A (aguA).